Consider the following 133-residue polypeptide: Transcription antitermination protein NusB (133 aa).

This sequence belongs to the NusB family.

Functionally, involved in transcription antitermination. Required for transcription of ribosomal RNA (rRNA) genes. Binds specifically to the boxA antiterminator sequence of the ribosomal RNA (rrn) operons. The sequence is that of Transcription antitermination protein NusB from Pediococcus pentosaceus (strain ATCC 25745 / CCUG 21536 / LMG 10740 / 183-1w).